A 972-amino-acid polypeptide reads, in one-letter code: FHF complex subunit HOOK-interacting protein 1B (972 aa).

Disordered stretches follow at residues Ala465 to Glu548 and Ser573 to Glu644. Ser467 carries the phosphoserine modification. The segment covering Arg478–Arg501 has biased composition (low complexity). Residues Ser510, Ser523, Ser529, and Ser533 each carry the phosphoserine modification. A compositionally biased stretch (low complexity) spans Ser523–Gly535. Ser859 and Ser897 each carry phosphoserine.

Belongs to the FHIP family. In terms of assembly, component of the FTS/Hook/FHIP complex (FHF complex), composed of AKTIP/FTS, FHIP1B, and one or more members of the Hook family of proteins HOOK1, HOOK2, and HOOK3. The FHF complex associates with the homotypic vesicular sorting complex (the HOPS complex).

Component of the FTS/Hook/FHIP complex (FHF complex). The FHF complex may function to promote vesicle trafficking and/or fusion via the homotypic vesicular protein sorting complex (the HOPS complex). FHF complex promotes the distribution of AP-4 complex to the perinuclear area of the cell. The polypeptide is FHF complex subunit HOOK-interacting protein 1B (Homo sapiens (Human)).